Consider the following 491-residue polypeptide: Protein nucleotidyltransferase YdiU (491 aa).

8 residues coordinate ATP: G94, G96, R97, K117, D129, G130, R180, and R187. The active-site Proton acceptor is the D256. Mg(2+)-binding residues include N257 and D266. ATP is bound at residue D266.

The protein belongs to the SELO family. Mg(2+) serves as cofactor. Mn(2+) is required as a cofactor.

It carries out the reaction L-seryl-[protein] + ATP = 3-O-(5'-adenylyl)-L-seryl-[protein] + diphosphate. It catalyses the reaction L-threonyl-[protein] + ATP = 3-O-(5'-adenylyl)-L-threonyl-[protein] + diphosphate. The catalysed reaction is L-tyrosyl-[protein] + ATP = O-(5'-adenylyl)-L-tyrosyl-[protein] + diphosphate. The enzyme catalyses L-histidyl-[protein] + UTP = N(tele)-(5'-uridylyl)-L-histidyl-[protein] + diphosphate. It carries out the reaction L-seryl-[protein] + UTP = O-(5'-uridylyl)-L-seryl-[protein] + diphosphate. It catalyses the reaction L-tyrosyl-[protein] + UTP = O-(5'-uridylyl)-L-tyrosyl-[protein] + diphosphate. In terms of biological role, nucleotidyltransferase involved in the post-translational modification of proteins. It can catalyze the addition of adenosine monophosphate (AMP) or uridine monophosphate (UMP) to a protein, resulting in modifications known as AMPylation and UMPylation. The sequence is that of Protein nucleotidyltransferase YdiU from Clostridium botulinum (strain ATCC 19397 / Type A).